The following is a 147-amino-acid chain: Hemoglobin subunit beta (147 aa).

Residues 3–147 (HWSCEEKQFI…VAHALALGYH (145 aa)) enclose the Globin domain. Heme b is bound by residues His64 and His93.

It belongs to the globin family. As to quaternary structure, heterotetramer of two alpha-D chains and two beta chains. As to expression, red blood cells.

Its function is as follows. Involved in oxygen transport from the lung to the various peripheral tissues. This Chelonoidis carbonarius (Red-footed tortoise) protein is Hemoglobin subunit beta (HBB).